The primary structure comprises 475 residues: Ankyrin repeat, SAM and basic leucine zipper domain-containing protein 1 (475 aa).

The disordered stretch occupies residues 1 to 24 (MAASALRGPPVAGGGESSESEDDG). Residues S17, S18, and S20 each carry the phosphoserine modification. ANK repeat units lie at residues 45-74 (EKKEKFKKAMTIGDVSLVQELLDSGISVDS), 78-107 (YGWTPLMYAASVANAELVRVLLDRGANASF), 110-144 (DKQSILITACSAHGSEEQILKCVELLLSRNADPNV), 148-177 (RLMTPIMYAARDGHTQVVALLVAHGAEVNT), 181-210 (NGYTALTWAARQGHKNIVLKLLELGANKML), and 214-243 (DGKMPSEIAKRNKHHEIFNLLSFTLNPLEG). One can recognise an SAM domain in the interval 272 to 334 (SYTAFGDLEV…KILAALKELQ (63 aa)).

Interacts with DDX4, PIWIL1, RANBP9 and TDRD1.

Its subcellular location is the cytoplasm. In terms of biological role, plays a central role during spermatogenesis by repressing transposable elements and preventing their mobilization, which is essential for the germline integrity. Acts via the piRNA metabolic process, which mediates the repression of transposable elements during meiosis by forming complexes composed of piRNAs and Piwi proteins and governs the methylation and subsequent repression of transposons. Its association with pi-bodies suggests a participation in the primary piRNAs metabolic process. Required prior to the pachytene stage to facilitate the production of multiple types of piRNAs, including those associated with repeats involved in the regulation of retrotransposons. May act by mediating protein-protein interactions during germ cell maturation. The polypeptide is Ankyrin repeat, SAM and basic leucine zipper domain-containing protein 1 (ASZ1) (Gorilla gorilla gorilla (Western lowland gorilla)).